The following is a 479-amino-acid chain: Nuclear receptor subfamily 6 group A member 1 (479 aa).

The segment at 1 to 32 is disordered; that stretch reads MERDERPPSGGGGGGGSAGFLEPPAALPPPPR. Positions 9 to 18 are enriched in gly residues; the sequence is SGGGGGGGSA. The nuclear receptor DNA-binding region spans 57-132; sequence QRTCLICGDR…MGMNRKAIRE (76 aa). 8 residues coordinate Zn(2+): cysteine 60, cysteine 63, cysteine 77, cysteine 80, cysteine 96, cysteine 102, cysteine 112, and cysteine 115. 2 consecutive NR C4-type zinc fingers follow at residues 60–80 and 96–120; these read CLIC…CEGC and CSRD…LLKC. Disordered stretches follow at residues 131–150 and 162–198; these read REDG…QISE and FEEE…TLSS. Residues 165 to 177 are compositionally biased toward basic and acidic residues; it reads EANHWSNHGDSDH. Residues 172–252 form a sufficient for interaction with UIMC1 region; it reads HGDSDHSSPG…RSLDPQSYSL (81 aa). Residues 178 to 198 show a composition bias toward polar residues; sequence SSPGNRASESNQPSPGSTLSS. The region spanning 248 to 479 is the NR LBD domain; sequence QSYSLIHQLV…HSCKTSVGKE (232 aa).

The protein belongs to the nuclear hormone receptor family. NR6 subfamily. Homodimer. Interacts with UIMC1.

It localises to the nucleus. Orphan nuclear receptor that binds to a response element containing the sequence 5'-TCAAGGTCA-3'. Acts as a regulator of embryonic stem cell pluripotency by mediating repression of POU5F1/OCT4: binds to the DR0 element within the POU5F1/OCT4 promoter and inhibits POU5F1/OCT4 expression during embryonic stem cell differentiation. Involved in the regulation of gene expression in germ cell development during gametogenesis. This is Nuclear receptor subfamily 6 group A member 1 (NR6A1) from Sus scrofa (Pig).